Consider the following 302-residue polypeptide: Proline dehydrogenase 1 (302 aa).

Lys95 is a binding site for substrate. Asp129 is an active-site residue. FAD is bound by residues Met130 and Gln158. Arg179 is a catalytic residue. Residues 182-184 (KGA) and 221-222 (TH) contribute to the FAD site. Substrate is bound at residue 283 to 284 (RR).

Belongs to the proline oxidase family. FAD serves as cofactor.

It catalyses the reaction L-proline + a quinone = (S)-1-pyrroline-5-carboxylate + a quinol + H(+). Its pathway is amino-acid degradation; L-proline degradation into L-glutamate; L-glutamate from L-proline: step 1/2. In terms of biological role, converts proline to delta-1-pyrroline-5-carboxylate. This chain is Proline dehydrogenase 1 (fadM), found in Bacillus subtilis subsp. natto.